We begin with the raw amino-acid sequence, 90 residues long: UPF0235 protein CPn_0497/CP_0257/CPj0497/CpB0517 (90 aa).

This sequence belongs to the UPF0235 family.

The polypeptide is UPF0235 protein CPn_0497/CP_0257/CPj0497/CpB0517 (Chlamydia pneumoniae (Chlamydophila pneumoniae)).